Reading from the N-terminus, the 92-residue chain is Probable acyl carrier protein (92 aa).

Residues 11 to 92 enclose the Carrier domain; the sequence is QVTFEELSAL…QVNATLRTAV (82 aa). Ser49 bears the O-(pantetheine 4'-phosphoryl)serine mark.

In terms of processing, 4'-phosphopantetheine is transferred from CoA to a specific serine of the apo-ACP-like protein.

Involved in developmentally regulated synthesis of a compound biosynthetically related to polyketide antibiotics which is essential for spore color in Streptomyces halstedii. This is Probable acyl carrier protein (sch3) from Streptomyces halstedii.